The primary structure comprises 207 residues: MSVYAVGLTGGVACGKSLLAQLFEALNTTVVDADTIARQVVEPGPVLNCIVARFGSKILRADGCLDRRFLRQRVFADVAERKALEAIVHPVIRARLKQAAAAAAGPYVLVVIPLLAEAGGRIGYPWLQRILVVDAIPEVQHARLMQRDSIDAEQASLMIAAQIGRKERLAIADDIVFNDGDPAHLGGQVCNLDARYRALASVFSDVD.

Residues A5–F203 form the DPCK domain. A13–L18 lines the ATP pocket.

This sequence belongs to the CoaE family.

It localises to the cytoplasm. The catalysed reaction is 3'-dephospho-CoA + ATP = ADP + CoA + H(+). The protein operates within cofactor biosynthesis; coenzyme A biosynthesis; CoA from (R)-pantothenate: step 5/5. In terms of biological role, catalyzes the phosphorylation of the 3'-hydroxyl group of dephosphocoenzyme A to form coenzyme A. The polypeptide is Dephospho-CoA kinase (Xylella fastidiosa (strain Temecula1 / ATCC 700964)).